The primary structure comprises 286 residues: Bifunctional protein FolD (286 aa).

Residues 166–168 (GRS), S191, and I232 contribute to the NADP(+) site.

Belongs to the tetrahydrofolate dehydrogenase/cyclohydrolase family. In terms of assembly, homodimer.

It catalyses the reaction (6R)-5,10-methylene-5,6,7,8-tetrahydrofolate + NADP(+) = (6R)-5,10-methenyltetrahydrofolate + NADPH. The catalysed reaction is (6R)-5,10-methenyltetrahydrofolate + H2O = (6R)-10-formyltetrahydrofolate + H(+). Its pathway is one-carbon metabolism; tetrahydrofolate interconversion. Its function is as follows. Catalyzes the oxidation of 5,10-methylenetetrahydrofolate to 5,10-methenyltetrahydrofolate and then the hydrolysis of 5,10-methenyltetrahydrofolate to 10-formyltetrahydrofolate. This Herpetosiphon aurantiacus (strain ATCC 23779 / DSM 785 / 114-95) protein is Bifunctional protein FolD.